The chain runs to 125 residues: S-adenosylmethionine decarboxylase proenzyme (125 aa).

Residue serine 71 is the Schiff-base intermediate with substrate; via pyruvic acid of the active site. Serine 71 carries the pyruvic acid (Ser); by autocatalysis modification. The active-site Proton acceptor; for processing activity is the histidine 76. Cysteine 91 (proton donor; for catalytic activity) is an active-site residue.

Belongs to the prokaryotic AdoMetDC family. Type 1 subfamily. As to quaternary structure, heterotetramer of two alpha and two beta chains arranged as a dimer of alpha/beta heterodimers. Pyruvate serves as cofactor. In terms of processing, is synthesized initially as an inactive proenzyme. Formation of the active enzyme involves a self-maturation process in which the active site pyruvoyl group is generated from an internal serine residue via an autocatalytic post-translational modification. Two non-identical subunits are generated from the proenzyme in this reaction, and the pyruvate is formed at the N-terminus of the alpha chain, which is derived from the carboxyl end of the proenzyme. The post-translation cleavage follows an unusual pathway, termed non-hydrolytic serinolysis, in which the side chain hydroxyl group of the serine supplies its oxygen atom to form the C-terminus of the beta chain, while the remainder of the serine residue undergoes an oxidative deamination to produce ammonia and the pyruvoyl group blocking the N-terminus of the alpha chain.

It carries out the reaction S-adenosyl-L-methionine + H(+) = S-adenosyl 3-(methylsulfanyl)propylamine + CO2. It participates in amine and polyamine biosynthesis; S-adenosylmethioninamine biosynthesis; S-adenosylmethioninamine from S-adenosyl-L-methionine: step 1/1. Functionally, catalyzes the decarboxylation of S-adenosylmethionine to S-adenosylmethioninamine (dcAdoMet), the propylamine donor required for the synthesis of the polyamines spermine and spermidine from the diamine putrescine. The protein is S-adenosylmethionine decarboxylase proenzyme of Pyrobaculum islandicum (strain DSM 4184 / JCM 9189 / GEO3).